A 681-amino-acid polypeptide reads, in one-letter code: Dipeptidyl carboxypeptidase (681 aa).

Histidine 470 is a binding site for Zn(2+). Glutamate 471 is a catalytic residue. Zn(2+)-binding residues include histidine 474 and histidine 477.

Belongs to the peptidase M3 family. Requires Zn(2+) as cofactor.

The protein localises to the cytoplasm. It catalyses the reaction Hydrolysis of unblocked, C-terminal dipeptides from oligopeptides, with broad specificity. Does not hydrolyze bonds in which P1' is Pro, or both P1 and P1' are Gly.. Its activity is regulated as follows. Stimulated by Mn(2+), Mg(2+), Co(2+) and Ca(2+), inhibited by Cu(2+), Ni(2+), Zn(2+), chymostatin and 1,10-phenanthroline. Removes dipeptides from the C-termini of N-blocked tripeptides, tetrapeptides and larger peptides. This is Dipeptidyl carboxypeptidase from Escherichia coli (strain K12).